The chain runs to 101 residues: Enhancer of yellow 2 transcription factor (101 aa).

This sequence belongs to the ENY2 family. Component of the nuclear pore complex (NPC)-associated AMEX complex (anchoring and mRNA export complex), composed of at least e(y)2 and xmas-2. Component of the SAGA transcription coactivator-HAT complexes, at least composed of Ada2b, e(y)2, Pcaf/Gcn5, Taf10 and Nipped-A/Trrap. Within the SAGA complex, e(y)2, Sgf11, and not/nonstop form an additional subcomplex of SAGA called the DUB module (deubiquitination module). Component of the THO complex, composed of at least e(y)2, HPR1, THO2, THOC5, THOC6 and THOC7. Interacts with e(y)1. Interacts with su(Hw) (via zinc fingers). Interacts with xmas-2; required for localization to the nuclear periphery. Interacts with the nuclear pore complex (NPC).

It localises to the nucleus. It is found in the nucleoplasm. The protein resides in the cytoplasm. Its function is as follows. Involved in mRNA export coupled transcription activation by association with both the AMEX and the SAGA complexes. The SAGA complex is a multiprotein complex that activates transcription by remodeling chromatin and mediating histone acetylation and deubiquitination. Within the SAGA complex, participates in a subcomplex that specifically deubiquitinates histone H2B. The SAGA complex is recruited to specific gene promoters by activators, where it is required for transcription. Required for nuclear receptor-mediated transactivation. Involved in transcription elongation by recruiting the THO complex onto nascent mRNA. The AMEX complex functions in docking export-competent ribonucleoprotein particles (mRNPs) to the nuclear entrance of the nuclear pore complex (nuclear basket). AMEX participates in mRNA export and accurate chromatin positioning in the nucleus by tethering genes to the nuclear periphery. This Drosophila yakuba (Fruit fly) protein is Enhancer of yellow 2 transcription factor.